We begin with the raw amino-acid sequence, 147 residues long: Formiminotransferase N-terminal subdomain-containing protein (147 aa).

An N-terminal signal peptide occupies residues 1–20 (MSSSRVGLRLAACLLNVSEA).

This sequence belongs to the formiminotransferase family. Widely expressed with highest levels in liver and skeletal muscle, and moderate levels in kidney, bone and pancreas.

In Homo sapiens (Human), this protein is Formiminotransferase N-terminal subdomain-containing protein (FTCDNL1).